The sequence spans 458 residues: Exodeoxyribonuclease 7 large subunit (458 aa).

This sequence belongs to the XseA family. In terms of assembly, heterooligomer composed of large and small subunits.

The protein localises to the cytoplasm. It carries out the reaction Exonucleolytic cleavage in either 5'- to 3'- or 3'- to 5'-direction to yield nucleoside 5'-phosphates.. In terms of biological role, bidirectionally degrades single-stranded DNA into large acid-insoluble oligonucleotides, which are then degraded further into small acid-soluble oligonucleotides. The chain is Exodeoxyribonuclease 7 large subunit from Halalkalibacterium halodurans (strain ATCC BAA-125 / DSM 18197 / FERM 7344 / JCM 9153 / C-125) (Bacillus halodurans).